A 472-amino-acid polypeptide reads, in one-letter code: 3-isopropylmalate dehydratase large subunit (472 aa).

[4Fe-4S] cluster is bound by residues Cys347, Cys407, and Cys410.

Belongs to the aconitase/IPM isomerase family. LeuC type 1 subfamily. As to quaternary structure, heterodimer of LeuC and LeuD. Requires [4Fe-4S] cluster as cofactor.

The catalysed reaction is (2R,3S)-3-isopropylmalate = (2S)-2-isopropylmalate. Its pathway is amino-acid biosynthesis; L-leucine biosynthesis; L-leucine from 3-methyl-2-oxobutanoate: step 2/4. Its function is as follows. Catalyzes the isomerization between 2-isopropylmalate and 3-isopropylmalate, via the formation of 2-isopropylmaleate. The sequence is that of 3-isopropylmalate dehydratase large subunit from Synechococcus sp. (strain CC9605).